We begin with the raw amino-acid sequence, 67 residues long: MGEISITKLLVVAALVVLLFGTRKLRTLGGDLGTAIKGFKKAMNDEDAGAKKEAGGDIQAEKLSHKE.

Residues 4 to 21 (ISITKLLVVAALVVLLFG) traverse the membrane as a helical segment. The disordered stretch occupies residues 46-67 (EDAGAKKEAGGDIQAEKLSHKE).

This sequence belongs to the TatA/E family. TatE subfamily.

The protein localises to the cell inner membrane. Its function is as follows. Part of the twin-arginine translocation (Tat) system that transports large folded proteins containing a characteristic twin-arginine motif in their signal peptide across membranes. TatE shares overlapping functions with TatA. This Citrobacter koseri (strain ATCC BAA-895 / CDC 4225-83 / SGSC4696) protein is Probable Sec-independent protein translocase protein TatE.